We begin with the raw amino-acid sequence, 174 residues long: ATP synthase subunit d, mitochondrial (174 aa).

Ser2 carries the post-translational modification N-acetylserine.

It belongs to the ATPase d subunit family. F-type ATPases have 2 components, CF(1) - the catalytic core - and CF(0) - the membrane proton channel. In yeast, the dimeric form of ATP synthase consists of 17 polypeptides: alpha, beta, gamma, delta, epsilon, 4 (B), 5 (OSCP), 6 (A), 8, 9 (C), d, E (Tim11), f, g, h, i/j and k.

It localises to the mitochondrion. The protein resides in the mitochondrion inner membrane. Functionally, mitochondrial membrane ATP synthase (F(1)F(0) ATP synthase or Complex V) produces ATP from ADP in the presence of a proton gradient across the membrane which is generated by electron transport complexes of the respiratory chain. F-type ATPases consist of two structural domains, F(1) - containing the extramembraneous catalytic core, and F(0) - containing the membrane proton channel, linked together by a central stalk and a peripheral stalk. During catalysis, ATP synthesis in the catalytic domain of F(1) is coupled via a rotary mechanism of the central stalk subunits to proton translocation. Part of the complex F(0) domain and the peripheric stalk, which acts as a stator to hold the catalytic alpha(3)beta(3) subcomplex and subunit a/ATP6 static relative to the rotary elements. This chain is ATP synthase subunit d, mitochondrial (ATP7), found in Saccharomyces cerevisiae (strain ATCC 204508 / S288c) (Baker's yeast).